The primary structure comprises 409 residues: Elongation factor Tu, chloroplastic (409 aa).

Residues 10 to 214 form the tr-type G domain; that stretch reads KPHINIGTIG…QVDSYIPTPT (205 aa). The G1 stretch occupies residues 19–26; it reads GHVDHGKT. Residue 19–26 coordinates GTP; sequence GHVDHGKT. Threonine 26 contributes to the Mg(2+) binding site. Lysine 57 bears the N6-methyllysine mark. A G2 region spans residues 60–64; it reads GITIN. The tract at residues 81-84 is G3; sequence DCPG. GTP is bound by residues 81–85 and 136–139; these read DCPGH and NKED. The tract at residues 136–139 is G4; sequence NKED. The G5 stretch occupies residues 174–176; that stretch reads SAL.

The protein belongs to the TRAFAC class translation factor GTPase superfamily. Classic translation factor GTPase family. EF-Tu/EF-1A subfamily.

It localises to the plastid. Its subcellular location is the chloroplast. It carries out the reaction GTP + H2O = GDP + phosphate + H(+). Functionally, GTP hydrolase that promotes the GTP-dependent binding of aminoacyl-tRNA to the A-site of ribosomes during protein biosynthesis. The sequence is that of Elongation factor Tu, chloroplastic (tufA) from Euglena gracilis.